Reading from the N-terminus, the 188-residue chain is MATTEKPVLSKYRDRMDKAVAALKEEFGSLRTGRASASLLDQIHVDAYGSSMPLTQVAAVSVPEPRMITVNVWDRGMVVSVEKAIRQSDLGLNPVVDGQTLRIPIPPLTEERRKDLAKIAGRYAEQQRVAVRNIRRDANEDLRKAQKDNVISQDEEKRMETEVQKMTDEAIKRIDEALKTKEQEIMQV.

Belongs to the RRF family.

It is found in the cytoplasm. Functionally, responsible for the release of ribosomes from messenger RNA at the termination of protein biosynthesis. May increase the efficiency of translation by recycling ribosomes from one round of translation to another. In Phenylobacterium zucineum (strain HLK1), this protein is Ribosome-recycling factor.